The chain runs to 260 residues: Putative methylesterase 19 (260 aa).

Catalysis depends on Ser81, which acts as the Acyl-ester intermediate. Active-site charge relay system residues include Asp210 and His238.

It belongs to the AB hydrolase superfamily. Methylesterase family.

Functionally, putative methylesterase. This Arabidopsis thaliana (Mouse-ear cress) protein is Putative methylesterase 19.